Reading from the N-terminus, the 373-residue chain is Chorismate synthase (373 aa).

Arginine 46 is a binding site for NADP(+). FMN contacts are provided by residues 123–125 (RSS), 250–251 (NA), glycine 295, 310–314 (KPTPS), and arginine 337.

The protein belongs to the chorismate synthase family. Requires FMNH2 as cofactor.

It catalyses the reaction 5-O-(1-carboxyvinyl)-3-phosphoshikimate = chorismate + phosphate. Its pathway is metabolic intermediate biosynthesis; chorismate biosynthesis; chorismate from D-erythrose 4-phosphate and phosphoenolpyruvate: step 7/7. Its function is as follows. Catalyzes the anti-1,4-elimination of the C-3 phosphate and the C-6 proR hydrogen from 5-enolpyruvylshikimate-3-phosphate (EPSP) to yield chorismate, which is the branch point compound that serves as the starting substrate for the three terminal pathways of aromatic amino acid biosynthesis. This reaction introduces a second double bond into the aromatic ring system. This is Chorismate synthase from Methanococcus aeolicus (strain ATCC BAA-1280 / DSM 17508 / OCM 812 / Nankai-3).